An 88-amino-acid chain; its full sequence is Small ribosomal subunit protein bS20 (88 aa).

The disordered stretch occupies residues 1–21 (MANTTSAKKATRKIARRTAVN).

Belongs to the bacterial ribosomal protein bS20 family.

In terms of biological role, binds directly to 16S ribosomal RNA. The chain is Small ribosomal subunit protein bS20 from Sinorhizobium fredii (strain NBRC 101917 / NGR234).